The following is a 402-amino-acid chain: Phosphoglycerate kinase (402 aa).

Substrate contacts are provided by residues 24-26 (DFN), Arg-40, 63-66 (HFGR), Arg-122, and Arg-155. Residues Lys-206, Gly-297, Glu-328, and 357 to 360 (GGDS) each bind ATP.

The protein belongs to the phosphoglycerate kinase family. In terms of assembly, monomer.

It localises to the cytoplasm. It carries out the reaction (2R)-3-phosphoglycerate + ATP = (2R)-3-phospho-glyceroyl phosphate + ADP. It functions in the pathway carbohydrate degradation; glycolysis; pyruvate from D-glyceraldehyde 3-phosphate: step 2/5. The protein is Phosphoglycerate kinase of Parasynechococcus marenigrum (strain WH8102).